Consider the following 218-residue polypeptide: Small ribosomal subunit protein uS5 (218 aa).

Positions 1-45 (MPGRQRRDGGNGPAGQNSNGPEGRDNRRGGGDRRGGGDRRDNAAE) are disordered. The span at 22–45 (EGRDNRRGGGDRRGGGDRRDNAAE) shows a compositional bias: basic and acidic residues. Positions 48–111 (QLERVVAINR…EEARKGFFRV (64 aa)) constitute an S5 DRBM domain.

It belongs to the universal ribosomal protein uS5 family. As to quaternary structure, part of the 30S ribosomal subunit. Contacts proteins S4 and S8.

In terms of biological role, with S4 and S12 plays an important role in translational accuracy. Its function is as follows. Located at the back of the 30S subunit body where it stabilizes the conformation of the head with respect to the body. The sequence is that of Small ribosomal subunit protein uS5 from Nocardia farcinica (strain IFM 10152).